The primary structure comprises 222 residues: Glutathione S-transferase A1 (222 aa).

N-acetylmethionine is present on M1. The residue at position 2 (A2) is an N-acetylalanine; in Glutathione S-transferase A1, N-terminally processed. The GST N-terminal domain occupies 3-83; sequence GKPTLHYFNG…YIATKYNLYG (81 aa). Residue K4 is modified to N6-succinyllysine. Glutathione is bound by residues Y9, K45, 54-55, and 67-68; these read QV and QT. The GST C-terminal domain maps to 85–208; that stretch reads DMKERALIDM…QPGSQRKPPT (124 aa).

This sequence belongs to the GST superfamily. Alpha family. In terms of assembly, homodimer or heterodimer of GSTA1 and GSTA2. Expressed in corpus luteum, adrenal gland, testis, liver, lung, thyroid and kidney.

The protein resides in the cytoplasm. The catalysed reaction is RX + glutathione = an S-substituted glutathione + a halide anion + H(+). It carries out the reaction prostaglandin A2 + glutathione = prostaglandin A2-S-(R)-glutathione. It catalyses the reaction prostaglandin J2 + glutathione = prostaglandin J2-S-(R)-glutathione. The enzyme catalyses (13S)-hydroperoxy-(9Z,11E)-octadecadienoate + 2 glutathione = (13S)-hydroxy-(9Z,11E)-octadecadienoate + glutathione disulfide + H2O. The catalysed reaction is androst-5-ene-3,17-dione = androst-4-ene-3,17-dione. Glutathione S-transferase that catalyzes the nucleophilic attack of the sulfur atom of glutathione on the electrophilic groups of a wide range of exogenous and endogenous compounds. Involved in the formation of glutathione conjugates of both prostaglandin A2 (PGA2) and prostaglandin J2 (PGJ2). It also catalyzes the isomerization of D5-androstene-3,17-dione (AD) into D4-androstene-3,17-dione and may therefore play an important role in hormone biosynthesis. Through its glutathione-dependent peroxidase activity toward the fatty acid hydroperoxide (13S)-hydroperoxy-(9Z,11E)-octadecadienoate/13-HPODE it is also involved in the metabolism of oxidized linoleic acid. This Bos taurus (Bovine) protein is Glutathione S-transferase A1 (GSTA1).